A 236-amino-acid chain; its full sequence is MAQTNGRTNRRDIYLKLRQMVLTLELAPGAALSENELAASMGVSRTPVRESLILLAQEGLVQVFPKIGSFVSRVDPARVADAQFLREAVELGSLDALPAELDPAVVGELRDNLVRQGRKDLDLEEFFGLDEAFHQGLMRLSGHGNVWTTVAAAKGHLDRARRLGLHENVSPAVFVAQHREIFDAVTEGDVPLARTAMRTHLRAVFDDIERIRAHSPELFATDAATVPVRRNIVVWE.

Residues Arg-7–Val-74 enclose the HTH gntR-type domain. Residues Glu-34–Ile-53 constitute a DNA-binding region (H-T-H motif).

This is an uncharacterized protein from Streptomyces ambofaciens.